A 788-amino-acid polypeptide reads, in one-letter code: Protein FAR1-RELATED SEQUENCE 5 (788 aa).

An FAR1 domain is found at 87 to 179 (AFYNSYARRI…VKDHNHELVP (93 aa)). Residues 299 to 395 (TVTFDTTYRS…CKWHILKKCQ (97 aa)) form the MULE domain. The segment at 584 to 616 (FNVLEMRANCSCQMFEFSGIICRHILAVFRVTN) adopts an SWIM-type zinc-finger fold. The disordered stretch occupies residues 713 to 733 (SSVTGGKHQQEVLAQPEPEDE). Residues 731–768 (EDEMDKKINQLRNELELANRKCEAYRTNLLSVLKEMED) adopt a coiled-coil conformation.

The protein belongs to the FHY3/FAR1 family. In terms of tissue distribution, expressed in hypocotyls, rosette and cauline leaves, inflorescences stems, flowers and siliques.

The protein localises to the nucleus. Putative transcription activator involved in regulating light control of development. This is Protein FAR1-RELATED SEQUENCE 5 (FRS5) from Arabidopsis thaliana (Mouse-ear cress).